The primary structure comprises 377 residues: UDP-N-acetylglucosamine--N-acetylmuramyl-(pentapeptide) pyrophosphoryl-undecaprenol N-acetylglucosamine transferase (377 aa).

UDP-N-acetyl-alpha-D-glucosamine is bound by residues 11-13, Asn123, Arg164, Ser194, and Gln295; that span reads TGG.

The protein belongs to the glycosyltransferase 28 family. MurG subfamily.

Its subcellular location is the cell inner membrane. The enzyme catalyses di-trans,octa-cis-undecaprenyl diphospho-N-acetyl-alpha-D-muramoyl-L-alanyl-D-glutamyl-meso-2,6-diaminopimeloyl-D-alanyl-D-alanine + UDP-N-acetyl-alpha-D-glucosamine = di-trans,octa-cis-undecaprenyl diphospho-[N-acetyl-alpha-D-glucosaminyl-(1-&gt;4)]-N-acetyl-alpha-D-muramoyl-L-alanyl-D-glutamyl-meso-2,6-diaminopimeloyl-D-alanyl-D-alanine + UDP + H(+). Its pathway is cell wall biogenesis; peptidoglycan biosynthesis. Its function is as follows. Cell wall formation. Catalyzes the transfer of a GlcNAc subunit on undecaprenyl-pyrophosphoryl-MurNAc-pentapeptide (lipid intermediate I) to form undecaprenyl-pyrophosphoryl-MurNAc-(pentapeptide)GlcNAc (lipid intermediate II). The polypeptide is UDP-N-acetylglucosamine--N-acetylmuramyl-(pentapeptide) pyrophosphoryl-undecaprenol N-acetylglucosamine transferase (Opitutus terrae (strain DSM 11246 / JCM 15787 / PB90-1)).